We begin with the raw amino-acid sequence, 130 residues long: Small ribosomal subunit protein uS11 (130 aa).

It belongs to the universal ribosomal protein uS11 family. Part of the 30S ribosomal subunit. Interacts with proteins S7 and S18. Binds to IF-3.

Its function is as follows. Located on the platform of the 30S subunit, it bridges several disparate RNA helices of the 16S rRNA. Forms part of the Shine-Dalgarno cleft in the 70S ribosome. This chain is Small ribosomal subunit protein uS11, found in Rippkaea orientalis (strain PCC 8801 / RF-1) (Cyanothece sp. (strain PCC 8801)).